The following is a 400-amino-acid chain: Argininosuccinate synthase (400 aa).

Residues Ala-10–Ser-18 and Ala-38 contribute to the ATP site. Tyr-89 lines the L-citrulline pocket. ATP is bound at residue Gly-119. 3 residues coordinate L-aspartate: Thr-121, Asn-125, and Asp-126. L-citrulline is bound at residue Asn-125. L-citrulline-binding residues include Arg-129, Ser-177, Ser-186, Glu-262, and Tyr-274.

The protein belongs to the argininosuccinate synthase family. Type 1 subfamily. As to quaternary structure, homotetramer.

It is found in the cytoplasm. The catalysed reaction is L-citrulline + L-aspartate + ATP = 2-(N(omega)-L-arginino)succinate + AMP + diphosphate + H(+). The protein operates within amino-acid biosynthesis; L-arginine biosynthesis; L-arginine from L-ornithine and carbamoyl phosphate: step 2/3. The sequence is that of Argininosuccinate synthase from Nostoc punctiforme (strain ATCC 29133 / PCC 73102).